The chain runs to 150 residues: D-aminoacyl-tRNA deacylase (150 aa).

Residues 138 to 139 (GP) carry the Gly-cisPro motif, important for rejection of L-amino acids motif.

It belongs to the DTD family. Homodimer.

The protein resides in the cytoplasm. It catalyses the reaction glycyl-tRNA(Ala) + H2O = tRNA(Ala) + glycine + H(+). The catalysed reaction is a D-aminoacyl-tRNA + H2O = a tRNA + a D-alpha-amino acid + H(+). An aminoacyl-tRNA editing enzyme that deacylates mischarged D-aminoacyl-tRNAs. Also deacylates mischarged glycyl-tRNA(Ala), protecting cells against glycine mischarging by AlaRS. Acts via tRNA-based rather than protein-based catalysis; rejects L-amino acids rather than detecting D-amino acids in the active site. By recycling D-aminoacyl-tRNA to D-amino acids and free tRNA molecules, this enzyme counteracts the toxicity associated with the formation of D-aminoacyl-tRNA entities in vivo and helps enforce protein L-homochirality. In Parabacteroides distasonis (strain ATCC 8503 / DSM 20701 / CIP 104284 / JCM 5825 / NCTC 11152), this protein is D-aminoacyl-tRNA deacylase.